The chain runs to 120 residues: Large ribosomal subunit protein uL18 (120 aa).

Belongs to the universal ribosomal protein uL18 family. Part of the 50S ribosomal subunit; part of the 5S rRNA/L5/L18/L25 subcomplex. Contacts the 5S and 23S rRNAs.

In terms of biological role, this is one of the proteins that bind and probably mediate the attachment of the 5S RNA into the large ribosomal subunit, where it forms part of the central protuberance. This is Large ribosomal subunit protein uL18 from Staphylococcus epidermidis (strain ATCC 35984 / DSM 28319 / BCRC 17069 / CCUG 31568 / BM 3577 / RP62A).